The chain runs to 169 residues: Putative phosphoesterase SH1944 (169 aa).

H34 functions as the Proton donor in the catalytic mechanism. 2 short sequence motifs (HXTX) span residues 34–37 (HITI) and 115–118 (HFTI). H115 (proton acceptor) is an active-site residue.

Belongs to the 2H phosphoesterase superfamily. YjcG family.

The polypeptide is Putative phosphoesterase SH1944 (Staphylococcus haemolyticus (strain JCSC1435)).